The following is a 252-amino-acid chain: Carboxymethylenebutenolidase (252 aa).

Residues 1 to 28 (MCHNKSSAPPTPAHISIQQNRTPGTDPV) are disordered. Catalysis depends on residues Cys-126, Asp-183, and His-214.

This sequence belongs to the dienelactone hydrolase family.

It carries out the reaction 2-(5-oxo-2,5-dihydrofuran-2-ylidene)acetate + H2O = 4-oxohex-2-enedioate + H(+). The protein operates within aromatic compound metabolism; 3-chlorocatechol degradation. Its function is as follows. Ring cleavage of cyclic ester dienelactone to produce maleylacetate. This chain is Carboxymethylenebutenolidase (clcD), found in Rhodococcus opacus (Nocardia opaca).